A 300-amino-acid chain; its full sequence is Bifunctional protein FolD 1 (300 aa).

NADP(+) contacts are provided by residues 166 to 168 (GRS), serine 191, and isoleucine 232.

The protein belongs to the tetrahydrofolate dehydrogenase/cyclohydrolase family. In terms of assembly, homodimer.

The catalysed reaction is (6R)-5,10-methylene-5,6,7,8-tetrahydrofolate + NADP(+) = (6R)-5,10-methenyltetrahydrofolate + NADPH. It carries out the reaction (6R)-5,10-methenyltetrahydrofolate + H2O = (6R)-10-formyltetrahydrofolate + H(+). It participates in one-carbon metabolism; tetrahydrofolate interconversion. Its function is as follows. Catalyzes the oxidation of 5,10-methylenetetrahydrofolate to 5,10-methenyltetrahydrofolate and then the hydrolysis of 5,10-methenyltetrahydrofolate to 10-formyltetrahydrofolate. The chain is Bifunctional protein FolD 1 from Roseobacter denitrificans (strain ATCC 33942 / OCh 114) (Erythrobacter sp. (strain OCh 114)).